Reading from the N-terminus, the 475-residue chain is ATP synthase subunit beta, chloroplastic (475 aa).

155-162 is an ATP binding site; it reads GGAGVGKT.

Belongs to the ATPase alpha/beta chains family. F-type ATPases have 2 components, CF(1) - the catalytic core - and CF(0) - the membrane proton channel. CF(1) has five subunits: alpha(3), beta(3), gamma(1), delta(1), epsilon(1). CF(0) has four main subunits: a(1), b(1), b'(1) and c(9-12).

Its subcellular location is the plastid. It is found in the chloroplast thylakoid membrane. It catalyses the reaction ATP + H2O + 4 H(+)(in) = ADP + phosphate + 5 H(+)(out). Produces ATP from ADP in the presence of a proton gradient across the membrane. The catalytic sites are hosted primarily by the beta subunits. This is ATP synthase subunit beta, chloroplastic from Ochrosphaera neapolitana.